Reading from the N-terminus, the 478-residue chain is Probable L-ascorbate peroxidase 8, chloroplastic (478 aa).

Residues 1-13 are compositionally biased toward low complexity; it reads MAERIAASLLPAA. 2 disordered regions span residues 1-31 and 44-66; these read MAER…VSAA and GGLR…RSGR. The N-terminal 76 residues, 1–76, are a transit peptide targeting the chloroplast; the sequence is MAERIAASLL…AGAGARAVVR (76 aa). Residues 14-26 are compositionally biased toward pro residues; that stretch reads SPSPAPSPPPPRP. His117 (proton acceptor) is an active-site residue. Positions 245 to 276 are disordered; the sequence is AHTLGRSRPDRSGWGKPETKYTKDGPGEPGGQ. Heme b is bound at residue His246. Thr247 serves as a coordination point for K(+). A compositionally biased stretch (basic and acidic residues) spans 251-270; the sequence is SRPDRSGWGKPETKYTKDGP. K(+) contacts are provided by Thr279 and Asp286. Positions 346 to 417 are disordered; that stretch reads AKFDPPEGFS…DNNGAAPQPE (72 aa). A compositionally biased stretch (pro residues) spans 369 to 381; it reads PAPAPAAAPPPPP. Low complexity predominate over residues 394–406; the sequence is PVTVGAAVASSPA. Residues 458–478 traverse the membrane as a helical segment; the sequence is YFLNIMLLIGGLAFLTSLLGS.

This sequence belongs to the peroxidase family. Ascorbate peroxidase subfamily. As to quaternary structure, interacts with SWEET11/OS8N3. Heme b serves as cofactor. In terms of tissue distribution, expressed in roots, leaves, stems and flowers. Expressed in leaves, shoots and panicles. Expressed at low levels in roots.

Its subcellular location is the plastid. It is found in the chloroplast thylakoid membrane. The enzyme catalyses L-ascorbate + H2O2 = L-dehydroascorbate + 2 H2O. Its function is as follows. Involved in defense response and tolerance to the bacterial pathogen Xanthomonas oryzae pv. oryzae (Xoo). Plays an important role in hydrogen peroxide removal during infection by Xoo. Involved in response to abiotic stress. Plays a role in hydrogen peroxide removal durings salt stress. This is Probable L-ascorbate peroxidase 8, chloroplastic from Oryza sativa subsp. japonica (Rice).